Consider the following 585-residue polypeptide: GRR1-like protein 1 (585 aa).

The F-box domain maps to 1–48 (MGLRFPPKVLEHILSFIDSNEDRNSVSLVCKSWFETERKTRKRVFVGN). Lysine 70 contacts 1D-myo-inositol hexakisphosphate. The interaction with auxin-responsive proteins stretch occupies residues 77–78 (DY). 1D-myo-inositol hexakisphosphate contacts are provided by residues 109-110 (KR) and arginine 340. The interval 343–348 (PSEPDL) is interaction with auxin-responsive proteins. Residue 397–399 (CFR) coordinates 1D-myo-inositol hexakisphosphate. The segment at 401 to 405 (CVIEP) is interaction with auxin-responsive proteins. Arginine 432 serves as a coordination point for 1D-myo-inositol hexakisphosphate. An interaction with auxin-responsive proteins region spans residues 460–461 (AF). Residues 480-481 (KK) and arginine 505 contribute to the 1D-myo-inositol hexakisphosphate site.

As to quaternary structure, part of a SCF (SKP1-cullin-F-box) protein ligase complex. Interacts with CUL1, SKP1A/ASK1 and SKP1B/ASK2. Interacts with Aux/IAA proteins (IAA7 and IAA12) in an auxin-dependent manner. As to expression, ubiquitous.

Its subcellular location is the nucleus. The protein operates within protein modification; protein ubiquitination. In terms of biological role, component of SCF(ASK-cullin-F-box) E3 ubiquitin ligase complexes, which may mediate the ubiquitination and subsequent proteasomal degradation of target proteins. Auxin receptor that mediates Aux/IAA proteins proteasomal degradation and auxin-regulated transcription. Involved in embryogenesis regulation by auxin. Confers sensitivity to the virulent bacterial pathogen P.syringae. Mediates glucose repression in yeast. The chain is GRR1-like protein 1 (GRH1) from Arabidopsis thaliana (Mouse-ear cress).